A 185-amino-acid polypeptide reads, in one-letter code: MDENKIKDAVRMIIEAIGENPEREGLAETPDRIARMYTEIFSGLKEKPEEHLKKVFTVNNDDIVLEKDIQFYSMCEHHFMPFYGKTHVAYIPNGKVVGLSKLARTVEVFAKRLQLQERMTVQIADSIMDYLKVKGVMVVIEAEHMCMTMRGIKKPGSKTVTVATRGIFKNKIEFRNQVYEMIKMK.

Zn(2+) is bound by residues cysteine 75, histidine 78, and cysteine 146.

It belongs to the GTP cyclohydrolase I family. As to quaternary structure, homomer.

It carries out the reaction GTP + H2O = 7,8-dihydroneopterin 3'-triphosphate + formate + H(+). It participates in cofactor biosynthesis; 7,8-dihydroneopterin triphosphate biosynthesis; 7,8-dihydroneopterin triphosphate from GTP: step 1/1. This is GTP cyclohydrolase 1 from Clostridium kluyveri (strain NBRC 12016).